The chain runs to 477 residues: Ankyrin repeat, SAM and basic leucine zipper domain-containing protein 1 (477 aa).

A disordered region spans residues 1–24 (MATSALRGLAVAGGGESSESEDDG). Residues S17, S18, and S20 each carry the phosphoserine modification. ANK repeat units lie at residues 46 to 76 (EKKEKFKKALTTGDVSLVQELLDSGIISVDA), 80 to 109 (YGWTPLMYAASVANAELVRVLLDRGANASF), 112 to 146 (DKQTILITACSAHGSEEQILKCVELLLSRNADPNV), 150 to 179 (RLMTPIMYAARDGHTQVVALLVASGAEVNT), 183 to 212 (NGYTALTWAARQGHKSIVLKLLELGANKML), and 216 to 245 (DGKLPSEIAKRNKHHEIFNLLSFTLNPLEG). The region spanning 274–336 (SYAEFGDLEV…KILAALKELE (63 aa)) is the SAM domain.

Interacts with DDX4, PIWIL1, RANBP9 and TDRD1.

It is found in the cytoplasm. Plays a central role during spermatogenesis by repressing transposable elements and preventing their mobilization, which is essential for the germline integrity. Acts via the piRNA metabolic process, which mediates the repression of transposable elements during meiosis by forming complexes composed of piRNAs and Piwi proteins and governs the methylation and subsequent repression of transposons. Its association with pi-bodies suggests a participation in the primary piRNAs metabolic process. Required prior to the pachytene stage to facilitate the production of multiple types of piRNAs, including those associated with repeats involved in the regulation of retrotransposons. May act by mediating protein-protein interactions during germ cell maturation. The sequence is that of Ankyrin repeat, SAM and basic leucine zipper domain-containing protein 1 (ASZ1) from Saimiri boliviensis boliviensis (Bolivian squirrel monkey).